Here is a 464-residue protein sequence, read N- to C-terminus: Desmin (464 aa).

At serine 2 the chain carries Blocked amino end (Ser). Residues 2–100 are head; that stretch reads SQSYSSSQRV…QEFLQTRTNE (99 aa). Serine 7 and serine 23 each carry phosphoserine; by CDK1. Threonine 65 is subject to Phosphothreonine; by CDK1. The IF rod domain occupies 100–408; it reads EKVELQELND…KLLEGEENRI (309 aa). Positions 101 to 133 are coil 1A; that stretch reads KVELQELNDRFANYIEKVRFLEQQNALMVAEVN. Residues 134–143 form a linker 1 region; the sequence is RLRGKEPTRV. Positions 144 to 244 are coil 1B; sequence AEMYEEELRE…HEEEIRELQA (101 aa). The segment at 245-260 is linker 12; the sequence is QLQEQHIQVEMDISKP. The coil 2A stretch occupies residues 261–279; that stretch reads DLTAALRDIRAQYESIAAK. Positions 280 to 287 are linker 2; sequence NIAEAEEW. The segment at 288–404 is coil 2B; that stretch reads YKSKVSDLTQ…ATYRKLLEGE (117 aa). The interval 405 to 464 is tail; that stretch reads ENRISIPMHQTFASALNFRETSPDQRGSEVHTKKTVMIKTIETRDGEVVSEATQQQHEVL.

Belongs to the intermediate filament family. In terms of assembly, homomer.

The protein localises to the cytoplasm. It localises to the myofibril. The protein resides in the sarcomere. Its subcellular location is the z line. It is found in the cell membrane. The protein localises to the sarcolemma. Functionally, muscle-specific type III intermediate filament essential for proper muscular structure and function. Plays a crucial role in maintaining the structure of sarcomeres, inter-connecting the Z-disks and forming the myofibrils, linking them not only to the sarcolemmal cytoskeleton, but also to the nucleus and mitochondria, thus providing strength for the muscle fiber during activity. In adult striated muscle they form a fibrous network connecting myofibrils to each other and to the plasma membrane from the periphery of the Z-line structures. The chain is Desmin (DES) from Gallus gallus (Chicken).